We begin with the raw amino-acid sequence, 478 residues long: MIQVLLVTICLAAFPYQGSSIILESGNVNDYEVIYPRKVTALPKGAVQPKYEDTMQYELKVNGQPVVLHLEKNKGLFSKDYSETHYSPDGRKITTNPSVEDHCYYHGRIENDADSTASISACNGLKGHFKLQGEMYIIEPLELSDSEDHAVFKLENVEKEDEAPKMCGVTQNWESNEPIKKASHLNLNPEHQRYVEIVIVVDHGMFTKYNGDSDKIRQRVHQMVNIMKESYRYMYIDISLAGIEIWSNKDLINVQPAAPNTLKSFGEWRETDLPKRKSHDNAQLLTSIDFNGQTIGIANIGAICDPKPSTRVVQDHSKINLRVALTMTHELSHNLGIHHDTGSCSCSGYSCIMSPVISDEPSKYFSDCSYIQCWNFIMNQKPQCILKKPLRTDTVSTPVSGNELLEARIECDCGSIENPCCYATTCKLRPGSQCAEGMCCDQCRFMKKGTVCRVSLVNKNDDTCTGQSADCPRNVLYG.

A signal peptide spans 1–20 (MIQVLLVTICLAAFPYQGSS). Positions 21-187 (IILESGNVND…PIKKASHLNL (167 aa)) are excised as a propeptide. One can recognise a Peptidase M12B domain in the interval 193-389 (RYVEIVIVVD…QKPQCILKKP (197 aa)). 3 disulfide bridges follow: Cys304–Cys384, Cys344–Cys368, and Cys346–Cys351. His329 is a Zn(2+) binding site. Glu330 is a catalytic residue. 2 residues coordinate Zn(2+): His333 and His339. The propeptide occupies 390-408 (LRTDTVSTPVSGNELLEAR). The 82-residue stretch at 397 to 478 (TPVSGNELLE…ADCPRNVLYG (82 aa)) folds into the Disintegrin domain. 6 disulfides stabilise this stretch: Cys411–Cys420, Cys413–Cys421, Cys426–Cys440, Cys434–Cys464, Cys439–Cys443, and Cys452–Cys471. Positions 474–478 (NVLYG) are excised as a propeptide.

It belongs to the venom metalloproteinase (M12B) family. P-II subfamily. P-IIa sub-subfamily. Zn(2+) is required as a cofactor. In terms of tissue distribution, expressed by the venom gland.

The protein resides in the secreted. Functionally, snake venom zinc metalloproteinase that causes hemorrhage by provoking the degradation of the sub-endothelial matrix proteins (fibronectin, laminin, type IV collagen, nidogen, and gelatins). Displays low cytotoxicity. In vitro, inhibits cancer cell migration (human breast cancer cell line MDA-MB-231) with a significant rate after 24 hours of incubation. The sequence is that of Zinc metalloproteinase/disintegrin (MPII) from Crotalus durissus collilineatus (Brazilian rattlesnake).